A 1398-amino-acid polypeptide reads, in one-letter code: DNA topoisomerase 2 (1398 aa).

ATP is bound by residues asparagine 69, asparagine 103, 131-133 (SDN), and 144-151 (GRNGFGAK). Residues 260-317 (NSNDNKNNKGQNDNNNNNNNNNDENANQNNDNLDVSLSNEPADGTPTKNNNNNNNNND) form a disordered region. The segment covering 267-291 (NKGQNDNNNNNNNNNDENANQNNDN) has biased composition (low complexity). Residue 411–413 (QTK) coordinates ATP. The 116-residue stretch at 493–608 (CTLILTEGDS…SLLKHKGFLS (116 aa)) folds into the Toprim domain. Residues glutamate 499, aspartate 577, and aspartate 579 each coordinate Mg(2+). The Topo IIA-type catalytic domain occupies 739 to 1191 (IPNIMDGWKP…TVETMWLKDI (453 aa)). Residue tyrosine 830 is the O-(5'-phospho-DNA)-tyrosine intermediate of the active site. The segment at 1012-1021 (KLKSTLTTTN) is interaction with DNA. 2 disordered regions span residues 1214 to 1250 (KFKVARKQGPSSMKKKKKKKKLSSDEESEGGDTSDSS) and 1262 to 1361 (NTNK…NSSI). Residues 1262–1276 (NTNKKTTTSSNNVNN) show a composition bias toward low complexity. Composition is skewed to polar residues over residues 1287–1300 (LNSNELDNTLSVSK) and 1348–1357 (DSTNDNNSEL).

The protein belongs to the type II topoisomerase family. As to quaternary structure, homodimer. The cofactor is Mg(2+). Mn(2+) is required as a cofactor. It depends on Ca(2+) as a cofactor.

The protein localises to the nucleus. It carries out the reaction ATP-dependent breakage, passage and rejoining of double-stranded DNA.. In terms of biological role, control of topological states of DNA by transient breakage and subsequent rejoining of DNA strands. Topoisomerase II makes double-strand breaks. The polypeptide is DNA topoisomerase 2 (TOP2) (Plasmodium falciparum (isolate K1 / Thailand)).